The following is a 252-amino-acid chain: Probable transcriptional regulatory protein Cagg_2594 (252 aa).

Residues 1–14 (MSGHSKWHTIRRAK) are compositionally biased toward basic residues. The disordered stretch occupies residues 1–22 (MSGHSKWHTIRRAKSANDQRRG).

It belongs to the TACO1 family.

The protein resides in the cytoplasm. This chain is Probable transcriptional regulatory protein Cagg_2594, found in Chloroflexus aggregans (strain MD-66 / DSM 9485).